The sequence spans 249 residues: MTVYFIGAGPGAADLITVRAQRIIAASPVCLYAGSLVPQELLAECPEGARVIDTARLSLDEIVALLIEADAAGQDVARLHSGDPSIFSAVAEQVRRLESAGVAYQVVPGVPAFTAAAASLGRELTVPGVSQSIVLTRVSTLSTAMPEGEDLRSLGRSGATMVVHLGAHRIDQIAEELIEDYGRDCPAAVVAFASRPDEIVLRGTLATIADQVKAAGVTKTAVVIVGRVLAAEGFPDSYLYSATRERTTH.

This sequence belongs to the precorrin methyltransferase family.

It catalyses the reaction precorrin-4 + S-adenosyl-L-methionine = precorrin-5 + S-adenosyl-L-homocysteine. Its pathway is cofactor biosynthesis; adenosylcobalamin biosynthesis; cob(II)yrinate a,c-diamide from precorrin-2 (aerobic route): step 4/10. In terms of biological role, catalyzes the methylation of C-11 in precorrin-4 to form precorrin-5. This is Precorrin-4 C(11)-methyltransferase (cobM) from Rhodococcus erythropolis (Arthrobacter picolinophilus).